The sequence spans 98 residues: HssA/B-like protein 36 (98 aa).

Positions 1–29 (MTLFSSISSISNPMTSSKSSISSFGSGTS) are disordered.

Belongs to the hssA/B family.

This chain is HssA/B-like protein 36 (hssl36), found in Dictyostelium discoideum (Social amoeba).